A 452-amino-acid chain; its full sequence is Exodeoxyribonuclease 7 large subunit (452 aa).

The protein belongs to the XseA family. Heterooligomer composed of large and small subunits.

The protein resides in the cytoplasm. It catalyses the reaction Exonucleolytic cleavage in either 5'- to 3'- or 3'- to 5'-direction to yield nucleoside 5'-phosphates.. Bidirectionally degrades single-stranded DNA into large acid-insoluble oligonucleotides, which are then degraded further into small acid-soluble oligonucleotides. The sequence is that of Exodeoxyribonuclease 7 large subunit from Bacillus cereus (strain G9842).